The chain runs to 1353 residues: Xanthine dehydrogenase (1353 aa).

A 2Fe-2S ferredoxin-type domain is found at 17–104 (STLIFFVNGK…GSAVTTVEGI (88 aa)). Cys-56, Cys-61, Cys-64, Cys-86, Cys-126, Cys-129, Cys-161, and Cys-163 together coordinate [2Fe-2S] cluster. Residues 245 to 434 (YKGERATWYR…VGLYFPKTLE (190 aa)) enclose the FAD-binding PCMH-type domain. FAD is bound by residues 273 to 280 (LVVGNTEI), Phe-353, 363 to 367 (SLGGN), Asp-376, Leu-424, and Lys-442. 2 residues coordinate Mo-molybdopterin: Gln-790 and Phe-821. 2 residues coordinate substrate: Glu-825 and Arg-903. Residue Arg-935 coordinates Mo-molybdopterin. A substrate-binding site is contributed by Phe-937. Residue Ala-1102 participates in Mo-molybdopterin binding. Catalysis depends on Glu-1285, which acts as the Proton acceptor.

Belongs to the xanthine dehydrogenase family. As to quaternary structure, homodimer. FAD serves as cofactor. The cofactor is Mo-molybdopterin. [2Fe-2S] cluster is required as a cofactor.

The protein localises to the peroxisome. The catalysed reaction is xanthine + NAD(+) + H2O = urate + NADH + H(+). It catalyses the reaction hypoxanthine + NAD(+) + H2O = xanthine + NADH + H(+). Key enzyme in purine degradation. Catalyzes the oxidation of hypoxanthine to xanthine. Catalyzes the oxidation of xanthine to uric acid. In Calliphora vicina (Blue blowfly), this protein is Xanthine dehydrogenase (XDH).